The chain runs to 130 residues: ATP synthase epsilon chain (130 aa).

Belongs to the ATPase epsilon chain family. As to quaternary structure, F-type ATPases have 2 components, CF(1) - the catalytic core - and CF(0) - the membrane proton channel. CF(1) has five subunits: alpha(3), beta(3), gamma(1), delta(1), epsilon(1). CF(0) has three main subunits: a, b and c.

The protein resides in the cell inner membrane. In terms of biological role, produces ATP from ADP in the presence of a proton gradient across the membrane. The chain is ATP synthase epsilon chain from Sulfurimonas denitrificans (strain ATCC 33889 / DSM 1251) (Thiomicrospira denitrificans (strain ATCC 33889 / DSM 1251)).